Here is a 434-residue protein sequence, read N- to C-terminus: Adenylosuccinate synthetase (434 aa).

Residues 22–28 and 50–52 contribute to the GTP site; these read GDEGKGK and GHT. Aspartate 23 serves as the catalytic Proton acceptor. 2 residues coordinate Mg(2+): aspartate 23 and glycine 50. Residues 23-26, 48-51, threonine 139, arginine 153, glutamine 234, threonine 249, and arginine 313 each bind IMP; these read DEGK and NAGH. Residue histidine 51 is the Proton donor of the active site. Residue 309 to 315 participates in substrate binding; sequence ATTGRKR. GTP is bound by residues arginine 315, 341–343, and 423–425; these read KLD and SVG.

It belongs to the adenylosuccinate synthetase family. Homodimer. The cofactor is Mg(2+).

It localises to the cytoplasm. The enzyme catalyses IMP + L-aspartate + GTP = N(6)-(1,2-dicarboxyethyl)-AMP + GDP + phosphate + 2 H(+). The protein operates within purine metabolism; AMP biosynthesis via de novo pathway; AMP from IMP: step 1/2. In terms of biological role, plays an important role in the de novo pathway of purine nucleotide biosynthesis. Catalyzes the first committed step in the biosynthesis of AMP from IMP. The polypeptide is Adenylosuccinate synthetase (Chlorobium phaeobacteroides (strain DSM 266 / SMG 266 / 2430)).